A 754-amino-acid polypeptide reads, in one-letter code: Nibrin (754 aa).

An FHA domain is found at Tyr-24–Met-83. 2 consecutive BRCT domains span residues Lys-105–Leu-181 and Gly-224–Ile-315. The interval Glu-111–His-328 is mediates interaction with SP100. The interaction with MTOR, MAPKAP1 and RICTOR stretch occupies residues Ile-221 to Thr-402. Ser-278 is modified (phosphoserine; by ATM). A disordered region spans residues Gln-326–Leu-346. The span at His-328–Leu-346 shows a compositional bias: polar residues. Thr-337 bears the Phosphothreonine mark. Phosphoserine; by ATM is present on Ser-343. Ser-347 bears the Phosphoserine mark. Residue Lys-388 is modified to N6-lactoyllysine. Disordered stretches follow at residues Leu-396 to Ser-415 and Leu-431 to Met-475. The residue at position 397 (Ser-397) is a Phosphoserine. Position 402 is a phosphothreonine (Thr-402). Composition is skewed to polar residues over residues Leu-431 to Asn-440 and Ser-447 to Ser-462. Ser-432 is modified (phosphoserine). Lys-435 is covalently cross-linked (Glycyl lysine isopeptide (Lys-Gly) (interchain with G-Cter in ubiquitin)). The short motif at Pro-461 to Glu-467 is the Nuclear localization signal element. Residues Ser-509 and Ser-518 each carry the phosphoserine modification. Glycyl lysine isopeptide (Lys-Gly) (interchain with G-Cter in SUMO2) cross-links involve residues Lys-571 and Lys-582. Residues Ser-615 and Ser-673 each carry the phosphoserine modification. Glycyl lysine isopeptide (Lys-Gly) (interchain with G-Cter in ubiquitin) cross-links involve residues Lys-686, Lys-690, and Lys-735. The FxF/Y motif motif lies at Ala-740–Tyr-749.

Belongs to the Nibrin family. As to quaternary structure, component of the MRN complex composed of two heterodimers RAD50 and MRE11 associated with a single NBN. The MRN complexes dimerize on DNA to form joined MRN-MRN oligomers required for DNA double-strand break repair. The MRN complexes dimerize on DNA to form joined MRN-MRN oligomers required for DNA double-strand break repair. As part of the MRN complex, interacts with MCM9; the interaction recruits the complex to DNA repair sites. Component of the BASC complex, at least composed of BRCA1, MSH2, MSH6, MLH1, ATM, BLM, RAD50, MRE11 and NBN. Interacts with histone H2AX; this requires phosphorylation of H2AX on 'Ser-139' and promotes NBN recruitment to DNA damage sites. Interacts with (phosphorylated) MDC1; promoting NBN recruitment to DNA damage sites. Interacts with (phosphorylated) RAD17; promoting NBN recruitment to DNA damage sites. Interacts (via FxF/Y motif) with ATM. Interacts with HJURP. Interacts with INTS3. Interacts with KPNA2. Interacts with TERF2; interaction is disrupted upon NBN phosphorylation by CDK2. Interacts with (phosphorylated) RBBP8/CtIP; the interaction links the role of the MRN complex in DNA double-strand break sensing to resection. Interacts with SP100; recruits NBN to PML bodies. Interacts with ATF2. Interacts with MTOR, MAPKAP1 isoform 2 and RICTOR; indicative for an association with the mTORC2 complex. Interacts with MRNIP. Interacts with UFL1; promoting UFL1 recruitment to double-strand breaks following DNA damage. Interacts with CYREN (via XLF motif). Phosphorylated by ATM in response of ionizing radiation, and such phosphorylation is responsible intra-S phase checkpoint control and telomere maintenance. Phosphorylated at Ser-432 by CDK2 in S/G2 phases abolishes interaction with TERF2, enabling DCLRE1B/Apollo recruitment to telomeres. Phosphorylation at Ser-432 in response to dysfunctional telomeres promotes non-homologous end joining repair at telomeres, while dephosphorylation by PPP1CA promotes microhomology-mediated end-joining (MMEJ) repair. In terms of processing, ubiquitinated at Lys-435 via 'Lys-6'-linked ubiquitin chains by RNF8, promoting NBN recruitment to DNA double-strand breaks (DSBs). Ubiquitinated at Lys-686 and Lys-689 via 'Lys-63'-linked ubiquitin chains by PELI1: ubiquitination takes place following PELI1 phosphorylation and promotes ATM activation and DNA repair. Ubiquitinated at Lys-735 via 'Lys-63'-linked ubiquitin chains by the SCF(SKP2) complex: ubiquitination takes place following SKP2 phosphorylation and promotes ATM activation and DNA repair. Post-translationally, lactylation at Lys-388 by KAT5 in response to DNA damage promotes recruitment of the MRN complex to DNA damage sites. Delactylated by HDAC3.

It localises to the nucleus. Its subcellular location is the chromosome. The protein localises to the PML body. It is found in the telomere. Functionally, component of the MRN complex, which plays a central role in double-strand break (DSB) repair, DNA recombination, maintenance of telomere integrity and meiosis. The MRN complex is involved in the repair of DNA double-strand breaks (DSBs) via homologous recombination (HR), an error-free mechanism which primarily occurs during S and G2 phases. The complex (1) mediates the end resection of damaged DNA, which generates proper single-stranded DNA, a key initial steps in HR, and is (2) required for the recruitment of other repair factors and efficient activation of ATM and ATR upon DNA damage. The MRN complex possesses single-strand endonuclease activity and double-strand-specific 3'-5' exonuclease activity, which are provided by MRE11, to initiate end resection, which is required for single-strand invasion and recombination. Within the MRN complex, NBN acts as a protein-protein adapter, which specifically recognizes and binds phosphorylated proteins, promoting their recruitment to DNA damage sites. Recruits MRE11 and RAD50 components of the MRN complex to DSBs in response to DNA damage. Promotes the recruitment of PI3/PI4-kinase family members ATM, ATR, and probably DNA-PKcs to the DNA damage sites, activating their functions. Mediates the recruitment of phosphorylated RBBP8/CtIP to DSBs, leading to cooperation between the MRN complex and RBBP8/CtIP to initiate end resection. RBBP8/CtIP specifically promotes the endonuclease activity of the MRN complex to clear DNA ends containing protein adducts. The MRN complex is also required for the processing of R-loops. NBN also functions in telomere length maintenance via its interaction with TERF2: interaction with TERF2 during G1 phase preventing recruitment of DCLRE1B/Apollo to telomeres. NBN also promotes DNA repair choice at dysfunctional telomeres: NBN phosphorylation by CK2 promotes non-homologous end joining repair at telomeres, while unphosphorylated NBN promotes microhomology-mediated end-joining (MMEJ) repair. Enhances AKT1 phosphorylation possibly by association with the mTORC2 complex. This is Nibrin (NBN) from Pongo abelii (Sumatran orangutan).